A 352-amino-acid chain; its full sequence is Phosphoribosylformylglycinamidine cyclo-ligase (352 aa).

This sequence belongs to the AIR synthase family.

It is found in the cytoplasm. The catalysed reaction is 2-formamido-N(1)-(5-O-phospho-beta-D-ribosyl)acetamidine + ATP = 5-amino-1-(5-phospho-beta-D-ribosyl)imidazole + ADP + phosphate + H(+). It functions in the pathway purine metabolism; IMP biosynthesis via de novo pathway; 5-amino-1-(5-phospho-D-ribosyl)imidazole from N(2)-formyl-N(1)-(5-phospho-D-ribosyl)glycinamide: step 2/2. In Nitrosospira multiformis (strain ATCC 25196 / NCIMB 11849 / C 71), this protein is Phosphoribosylformylglycinamidine cyclo-ligase.